Reading from the N-terminus, the 357-residue chain is Non-structural protein NS2 (357 aa).

2 disordered regions span residues 169–191 (PRLQ…DEAK) and 229–266 (DERD…HPKT). Residues 233-249 (EGDRDERGDEEQVKTLS) are compositionally biased toward basic and acidic residues. Residues 250–260 (DDDDQGEDASD) show a composition bias toward acidic residues.

It belongs to the orbivirus non-structural protein NS2 family.

Functionally, single-stranded RNA-binding protein. The protein is Non-structural protein NS2 (Segment-8) of Antilocapra americana (Pronghorn).